A 338-amino-acid chain; its full sequence is Methionine synthase (338 aa).

Positions 210, 212, 234, and 294 each coordinate Zn(2+).

It belongs to the archaeal MetE family. Requires Zn(2+) as cofactor.

It functions in the pathway amino-acid biosynthesis; L-methionine biosynthesis via de novo pathway. Catalyzes the transfer of a methyl group to L-homocysteine resulting in methionine formation. The physiological methyl donor is unknown. The sequence is that of Methionine synthase from Pyrococcus horikoshii (strain ATCC 700860 / DSM 12428 / JCM 9974 / NBRC 100139 / OT-3).